The chain runs to 83 residues: Putative membrane protein insertion efficiency factor (83 aa).

The segment at 64–83 (GGFDPVPLKKDKNSKTTHHH) is disordered.

It belongs to the UPF0161 family.

Its subcellular location is the cell membrane. Could be involved in insertion of integral membrane proteins into the membrane. The protein is Putative membrane protein insertion efficiency factor of Staphylococcus epidermidis (strain ATCC 12228 / FDA PCI 1200).